A 271-amino-acid chain; its full sequence is Formamidopyrimidine-DNA glycosylase (271 aa).

The active-site Schiff-base intermediate with DNA is Pro-2. Glu-3 serves as the catalytic Proton donor. The active-site Proton donor; for beta-elimination activity is the Lys-58. DNA contacts are provided by His-92, Arg-111, and Arg-152. The FPG-type zinc finger occupies 237–271 (MVYGREGQACKHCGRELKHATIGQRATVWCAACQR). Arg-261 functions as the Proton donor; for delta-elimination activity in the catalytic mechanism.

This sequence belongs to the FPG family. Monomer. It depends on Zn(2+) as a cofactor.

The enzyme catalyses Hydrolysis of DNA containing ring-opened 7-methylguanine residues, releasing 2,6-diamino-4-hydroxy-5-(N-methyl)formamidopyrimidine.. It catalyses the reaction 2'-deoxyribonucleotide-(2'-deoxyribose 5'-phosphate)-2'-deoxyribonucleotide-DNA = a 3'-end 2'-deoxyribonucleotide-(2,3-dehydro-2,3-deoxyribose 5'-phosphate)-DNA + a 5'-end 5'-phospho-2'-deoxyribonucleoside-DNA + H(+). Its function is as follows. Involved in base excision repair of DNA damaged by oxidation or by mutagenic agents. Acts as a DNA glycosylase that recognizes and removes damaged bases. Has a preference for oxidized purines, such as 7,8-dihydro-8-oxoguanine (8-oxoG). Has AP (apurinic/apyrimidinic) lyase activity and introduces nicks in the DNA strand. Cleaves the DNA backbone by beta-delta elimination to generate a single-strand break at the site of the removed base with both 3'- and 5'-phosphates. The sequence is that of Formamidopyrimidine-DNA glycosylase from Xanthomonas campestris pv. campestris (strain B100).